A 577-amino-acid chain; its full sequence is Proline--tRNA ligase (577 aa).

Belongs to the class-II aminoacyl-tRNA synthetase family. ProS type 1 subfamily. In terms of assembly, homodimer.

It is found in the cytoplasm. The catalysed reaction is tRNA(Pro) + L-proline + ATP = L-prolyl-tRNA(Pro) + AMP + diphosphate. Catalyzes the attachment of proline to tRNA(Pro) in a two-step reaction: proline is first activated by ATP to form Pro-AMP and then transferred to the acceptor end of tRNA(Pro). As ProRS can inadvertently accommodate and process non-cognate amino acids such as alanine and cysteine, to avoid such errors it has two additional distinct editing activities against alanine. One activity is designated as 'pretransfer' editing and involves the tRNA(Pro)-independent hydrolysis of activated Ala-AMP. The other activity is designated 'posttransfer' editing and involves deacylation of mischarged Ala-tRNA(Pro). The misacylated Cys-tRNA(Pro) is not edited by ProRS. The sequence is that of Proline--tRNA ligase from Helicobacter pylori (strain Shi470).